A 520-amino-acid polypeptide reads, in one-letter code: Protein root UVB sensitive 4 (520 aa).

2 consecutive transmembrane segments (helical) span residues 275 to 295 and 301 to 321; these read IQTV…NMLF and LQAC…LLGI.

It belongs to the RUS1 family.

It localises to the membrane. The sequence is that of Protein root UVB sensitive 4 from Arabidopsis thaliana (Mouse-ear cress).